The following is a 39-amino-acid chain: Photosystem II reaction center protein Y (39 aa).

The helical transmembrane segment at 7–25 (LLIVLLPILAAAGWAVFNI) threads the bilayer.

This sequence belongs to the PsbY family. In terms of assembly, PSII is composed of 1 copy each of membrane proteins PsbA, PsbB, PsbC, PsbD, PsbE, PsbF, PsbH, PsbI, PsbJ, PsbK, PsbL, PsbM, PsbT, PsbX, PsbY, PsbZ, Psb30/Ycf12, peripheral proteins PsbO, CyanoQ (PsbQ), PsbU, PsbV and a large number of cofactors. It forms dimeric complexes.

Its subcellular location is the cellular thylakoid membrane. Functionally, loosely associated component of the core of photosystem II (PSII), it is not always seen in crystals. PSII is a light-driven water plastoquinone oxidoreductase, using light energy to abstract electrons from H(2)O, generating a proton gradient subsequently used for ATP formation. The sequence is that of Photosystem II reaction center protein Y from Trichodesmium erythraeum (strain IMS101).